Reading from the N-terminus, the 578-residue chain is Laccase-10 (578 aa).

The N-terminal stretch at 1-29 (MGARCLALLLLYGTLLLLLLLPQLPLAGA) is a signal peptide. Plastocyanin-like domains are found at residues 37-153 (NVKL…PKAG) and 163-319 (KDVP…YAPP). 2 N-linked (GlcNAc...) asparagine glycosylation sites follow: Asn42 and Asn83. 2 residues coordinate Cu cation: His87 and His89. An N-linked (GlcNAc...) asparagine glycan is attached at Asn119. Cu cation is bound by residues His132 and His134. N-linked (GlcNAc...) asparagine glycosylation is found at Asn192, Asn208, Asn244, Asn307, Asn336, Asn384, Asn392, Asn402, Asn438, Asn445, Asn448, Asn451, and Asn461. Residues 428–562 (DFPASPLEPF…KMAWVVNDGP (135 aa)) enclose the Plastocyanin-like 3 domain. Residues His479, His482, His484, His541, Cys542, His543, and His547 each contribute to the Cu cation site.

The protein belongs to the multicopper oxidase family. Cu cation is required as a cofactor.

It localises to the secreted. The protein resides in the extracellular space. It is found in the apoplast. The catalysed reaction is 4 hydroquinone + O2 = 4 benzosemiquinone + 2 H2O. Its function is as follows. Lignin degradation and detoxification of lignin-derived products. The chain is Laccase-10 (LAC10) from Oryza sativa subsp. japonica (Rice).